The sequence spans 406 residues: Elongation factor Tu (406 aa).

Residues 10–215 form the tr-type G domain; it reads KPHVNVGTIG…AIDEYIPTPV (206 aa). Residues 19–26 form a G1 region; the sequence is GHVDHGKT. Position 19-26 (19-26) interacts with GTP; it reads GHVDHGKT. Thr26 contributes to the Mg(2+) binding site. The segment at 61–65 is G2; that stretch reads GITIN. The segment at 82–85 is G3; the sequence is DCPG. GTP-binding positions include 82–86 and 137–140; these read DCPGH and NKVD. The segment at 137–140 is G4; that stretch reads NKVD. The interval 175 to 177 is G5; the sequence is SAL.

It belongs to the TRAFAC class translation factor GTPase superfamily. Classic translation factor GTPase family. EF-Tu/EF-1A subfamily. As to quaternary structure, monomer.

The protein resides in the cytoplasm. The enzyme catalyses GTP + H2O = GDP + phosphate + H(+). GTP hydrolase that promotes the GTP-dependent binding of aminoacyl-tRNA to the A-site of ribosomes during protein biosynthesis. In Thermus aquaticus, this protein is Elongation factor Tu.